The primary structure comprises 141 residues: Nucleoside diphosphate kinase (141 aa).

6 residues coordinate ATP: Lys11, Phe59, Arg87, Thr93, Arg104, and Asn114. The Pros-phosphohistidine intermediate role is filled by His117.

This sequence belongs to the NDK family. Homotetramer. Mg(2+) is required as a cofactor.

It is found in the cytoplasm. It catalyses the reaction a 2'-deoxyribonucleoside 5'-diphosphate + ATP = a 2'-deoxyribonucleoside 5'-triphosphate + ADP. It carries out the reaction a ribonucleoside 5'-diphosphate + ATP = a ribonucleoside 5'-triphosphate + ADP. Its function is as follows. Major role in the synthesis of nucleoside triphosphates other than ATP. The ATP gamma phosphate is transferred to the NDP beta phosphate via a ping-pong mechanism, using a phosphorylated active-site intermediate. The sequence is that of Nucleoside diphosphate kinase from Legionella pneumophila subsp. pneumophila (strain Philadelphia 1 / ATCC 33152 / DSM 7513).